The sequence spans 110 residues: Large ribosomal subunit protein P2C (110 aa).

The interval 83–110 (APAAEEAAKEEAKEEEESDEDMGFGLFD) is disordered. A compositionally biased stretch (acidic residues) spans 95–104 (KEEEESDEDM). Ser100 is modified (phosphoserine).

Belongs to the eukaryotic ribosomal protein P1/P2 family. As to quaternary structure, component of the large ribosomal subunit (LSU). Mature yeast ribosomes consist of a small (40S) and a large (60S) subunit. The 40S small subunit contains 1 molecule of ribosomal RNA (18S rRNA) and at least 33 different proteins. The large 60S subunit contains 3 rRNA molecules (25S, 5.8S and 5S rRNA) and at least 46 different proteins. The acidic ribosomal P-proteins form the stalk structure of the 60S subunit. They are organized as a pentameric complex in which uL10/P0 interacts with 2 heterodimers of P1 and P2 proteins.

It localises to the cytoplasm. In terms of biological role, component of the ribosome, a large ribonucleoprotein complex responsible for the synthesis of proteins in the cell. The small ribosomal subunit (SSU) binds messenger RNAs (mRNAs) and translates the encoded message by selecting cognate aminoacyl-transfer RNA (tRNA) molecules. The large subunit (LSU) contains the ribosomal catalytic site termed the peptidyl transferase center (PTC), which catalyzes the formation of peptide bonds, thereby polymerizing the amino acids delivered by tRNAs into a polypeptide chain. The nascent polypeptides leave the ribosome through a tunnel in the LSU and interact with protein factors that function in enzymatic processing, targeting, and the membrane insertion of nascent chains at the exit of the ribosomal tunnel. The chain is Large ribosomal subunit protein P2C (rpp203) from Schizosaccharomyces pombe (strain 972 / ATCC 24843) (Fission yeast).